A 422-amino-acid chain; its full sequence is Golgi-associated RAB2 interactor protein 2 (422 aa).

Residues 353–404 form a disordered region; the sequence is PVESEANTSKEMKDKTSEEKMPDFQSTALKAEESRSLRTESNTSVLSPHIKS. The span at 360–374 shows a compositional bias: basic and acidic residues; sequence TSKEMKDKTSEEKMP.

It belongs to the GARIN family. Interacts with CALM1. Expressed in spermatozoa (at protein level).

The protein localises to the cell projection. It localises to the cilium. It is found in the flagellum. Functionally, seems to play a role in sperm motility. This is Golgi-associated RAB2 interactor protein 2 from Homo sapiens (Human).